The primary structure comprises 204 residues: 5'-deoxynucleotidase HDDC2 (204 aa).

A2 bears the N-acetylalanine mark. Phosphoserine occurs at positions 3 and 5. Positions 46–148 (VSDHMYRMAV…VKQLDQCEMI (103 aa)) constitute an HD domain. A divalent metal cation contacts are provided by H49, H77, D78, E81, D86, I87, and D143. Residue S204 is modified to Phosphoserine.

It belongs to the HDDC2 family. Homodimer. The cofactor is Mn(2+). Co(2+) is required as a cofactor. It depends on Mg(2+) as a cofactor.

It carries out the reaction a 2'-deoxyribonucleoside 5'-phosphate + H2O = a 2'-deoxyribonucleoside + phosphate. In terms of biological role, catalyzes the dephosphorylation of the nucleoside 5'-monophosphates deoxyadenosine monophosphate (dAMP), deoxycytidine monophosphate (dCMP), deoxyguanosine monophosphate (dGMP) and deoxythymidine monophosphate (dTMP). The sequence is that of 5'-deoxynucleotidase HDDC2 (HDDC2) from Homo sapiens (Human).